Reading from the N-terminus, the 119-residue chain is MMKLYSLVIIATLAAAAFAATSEEISAAVSEIISQHQEDLERYAKIVERGEEPKKYIRCSKQLGQSCYLNCECCGASAVCEDIKYICKDKVSDNSILDAMGKAWNAVGNSISRYYCSAE.

Residues 1–19 form the signal peptide; sequence MMKLYSLVIIATLAAAAFA. 4 disulfides stabilise this stretch: Cys59-Cys74, Cys67-Cys80, Cys71-Cys116, and Cys73-Cys87.

The protein belongs to the neurotoxin 25 family. ICK-8 subfamily. Expressed by the venom gland.

It localises to the secreted. Ion channel inhibitor. This chain is Toxin ICK-8, found in Trittame loki (Brush-footed trapdoor spider).